Reading from the N-terminus, the 380-residue chain is Ubiquitin-like protein 7 (380 aa).

The 81-residue stretch at 18 to 98 folds into the Ubiquitin-like domain; it reads APKSILRLPE…VLRKSWPEPD (81 aa). A disordered region spans residues 201–313; it reads PMPGADSSSR…SSSVQSGTPI (113 aa). Residue S230 is modified to Phosphoserine. Composition is skewed to low complexity over residues 239 to 255 and 270 to 312; these read SARS…RPAS and SELA…SGTP. Residues 333-377 enclose the UBA domain; the sequence is SLQSQWQPQLQQLRDMGIQDDELSLRALQATGGDIQAALELIFAG.

In terms of assembly, binds ubiquitin. Interacts with MAVS; this interaction enhances TRIM21-dependent 'Lys-27'-linked polyubiquitination of MAVS. In terms of processing, deubiquitinated by OTUD4 which stabilizes UBL7 expression.

In terms of biological role, interferon-stimulated protein that positively regulates RNA virus-triggered innate immune signaling. Mechanistically, promotes 'Lys-27'-linked polyubiquitination of MAVS through TRIM21 leading to enhanced the IFN signaling pathway. This Bos taurus (Bovine) protein is Ubiquitin-like protein 7 (UBL7).